We begin with the raw amino-acid sequence, 258 residues long: Imidazole glycerol phosphate synthase subunit HisF (258 aa).

Residues Asp11 and Asp130 contribute to the active site.

This sequence belongs to the HisA/HisF family. In terms of assembly, heterodimer of HisH and HisF.

It is found in the cytoplasm. It catalyses the reaction 5-[(5-phospho-1-deoxy-D-ribulos-1-ylimino)methylamino]-1-(5-phospho-beta-D-ribosyl)imidazole-4-carboxamide + L-glutamine = D-erythro-1-(imidazol-4-yl)glycerol 3-phosphate + 5-amino-1-(5-phospho-beta-D-ribosyl)imidazole-4-carboxamide + L-glutamate + H(+). The protein operates within amino-acid biosynthesis; L-histidine biosynthesis; L-histidine from 5-phospho-alpha-D-ribose 1-diphosphate: step 5/9. In terms of biological role, IGPS catalyzes the conversion of PRFAR and glutamine to IGP, AICAR and glutamate. The HisF subunit catalyzes the cyclization activity that produces IGP and AICAR from PRFAR using the ammonia provided by the HisH subunit. This is Imidazole glycerol phosphate synthase subunit HisF from Haemophilus influenzae (strain 86-028NP).